The following is a 225-amino-acid chain: MSLTERIGQTPKAYELANERGPFSVEVYLNPGTSNTYQYVATTRNKFNNTDYDDLPWNYTSGKKVVTATGVVSGGERYVFLLRSEIAQDIQVTMYNTNGGSNPLNNSNVTRSNVDSSSYYQQPPQVVYNNGDLYGSRTGYSGAELGASIDKGIASLWGYLKQPLVMVGIAAVVGYLIYRYYYMSRPIGFGSSGAYDVPLLDTPLLRDSYRLPQSFTRDPLFRNSV.

N-linked (GlcNAc...) asparagine; by host glycans are attached at residues asparagine 48, asparagine 58, asparagine 105, and asparagine 108. A helical membrane pass occupies residues 156–178; the sequence is LWGYLKQPLVMVGIAAVVGYLIY.

The protein belongs to the ascovirus HvAv ORF58 family.

Its subcellular location is the membrane. This is an uncharacterized protein from Heliothis virescens ascovirus 3e (HvAV-3e).